The sequence spans 31 residues: Cliotide T17 (31 aa).

The segment at residues 1 to 31 is a cross-link (cyclopeptide (Gly-Asn)); it reads GTVPCGESCVFIPCITGIAGCSCKNKVCYLN. 3 cysteine pairs are disulfide-bonded: C5–C21, C9–C23, and C14–C28.

In terms of processing, contains 3 disulfide bonds. This is a cyclic peptide. In terms of tissue distribution, expressed in root nodules but not in seed.

In terms of biological role, probably participates in a plant defense mechanism. This Clitoria ternatea (Butterfly pea) protein is Cliotide T17.